The chain runs to 469 residues: Mitochondrial-processing peptidase subunit beta (469 aa).

Position 78 (histidine 78) interacts with Zn(2+). The Proton acceptor role is filled by glutamate 81. Positions 82 and 159 each coordinate Zn(2+).

This sequence belongs to the peptidase M16 family. Heterodimer of alpha and beta subunits, forming the mitochondrial processing protease (MPP) in which subunit alpha is involved in substrate recognition and binding and subunit beta is the catalytic subunit. mppB is probably also part of the cytochrome bc1 complex as a core I protein in the mitochondrial inner membrane. The cofactor is Zn(2+).

The protein localises to the mitochondrion inner membrane. The protein resides in the mitochondrion matrix. It carries out the reaction Release of N-terminal transit peptides from precursor proteins imported into the mitochondrion, typically with Arg in position P2.. Its activity is regulated as follows. Binding to alpha subunit is required for catalytic activity. Functionally, catalytic subunit of the essential mitochondrial processing protease (MPP), which cleaves the mitochondrial sequence off newly imported precursors proteins. Preferentially, cleaves after an arginine at position P2. Plays an essential role in mitochondrial biogenesis. The sequence is that of Mitochondrial-processing peptidase subunit beta (mppB) from Dictyostelium discoideum (Social amoeba).